The following is a 577-amino-acid chain: Arginine--tRNA ligase (577 aa).

A 'HIGH' region motif is present at residues 122-132 (PNVAKEMHVGH).

The protein belongs to the class-I aminoacyl-tRNA synthetase family. In terms of assembly, monomer.

The protein localises to the cytoplasm. It catalyses the reaction tRNA(Arg) + L-arginine + ATP = L-arginyl-tRNA(Arg) + AMP + diphosphate. The polypeptide is Arginine--tRNA ligase (Vibrio campbellii (strain ATCC BAA-1116)).